The primary structure comprises 460 residues: Phosphomethylpyrimidine synthase (460 aa).

Substrate contacts are provided by residues asparagine 80, methionine 109, tyrosine 139, histidine 175, 195–197, 236–239, and glutamate 275; these read SRG and DSLR. Position 279 (histidine 279) interacts with Zn(2+). Tyrosine 302 contacts substrate. Histidine 343 is a Zn(2+) binding site. [4Fe-4S] cluster contacts are provided by cysteine 423, cysteine 426, and cysteine 431.

Belongs to the ThiC family. [4Fe-4S] cluster serves as cofactor.

The enzyme catalyses 5-amino-1-(5-phospho-beta-D-ribosyl)imidazole + S-adenosyl-L-methionine = 4-amino-2-methyl-5-(phosphooxymethyl)pyrimidine + CO + 5'-deoxyadenosine + formate + L-methionine + 3 H(+). The protein operates within cofactor biosynthesis; thiamine diphosphate biosynthesis. Catalyzes the synthesis of the hydroxymethylpyrimidine phosphate (HMP-P) moiety of thiamine from aminoimidazole ribotide (AIR) in a radical S-adenosyl-L-methionine (SAM)-dependent reaction. The protein is Phosphomethylpyrimidine synthase of Microcystis aeruginosa (strain NIES-843 / IAM M-2473).